The primary structure comprises 574 residues: Proline--tRNA ligase (574 aa).

This sequence belongs to the class-II aminoacyl-tRNA synthetase family. ProS type 1 subfamily. Homodimer.

It is found in the cytoplasm. It catalyses the reaction tRNA(Pro) + L-proline + ATP = L-prolyl-tRNA(Pro) + AMP + diphosphate. Its function is as follows. Catalyzes the attachment of proline to tRNA(Pro) in a two-step reaction: proline is first activated by ATP to form Pro-AMP and then transferred to the acceptor end of tRNA(Pro). As ProRS can inadvertently accommodate and process non-cognate amino acids such as alanine and cysteine, to avoid such errors it has two additional distinct editing activities against alanine. One activity is designated as 'pretransfer' editing and involves the tRNA(Pro)-independent hydrolysis of activated Ala-AMP. The other activity is designated 'posttransfer' editing and involves deacylation of mischarged Ala-tRNA(Pro). The misacylated Cys-tRNA(Pro) is not edited by ProRS. The sequence is that of Proline--tRNA ligase from Sodalis glossinidius (strain morsitans).